Reading from the N-terminus, the 164-residue chain is Peptidyl-prolyl cis-trans isomerase A (164 aa).

Residue methionine 1 is modified to N-acetylmethionine. Valine 2 bears the N-acetylvaline; in Peptidyl-prolyl cis-trans isomerase A, N-terminally processed mark. In terms of domain architecture, PPIase cyclophilin-type spans 7-163 (FFDIAVDGEP…KKITIADCGQ (157 aa)). Residue lysine 28 is modified to N6-acetyllysine; alternate. Lysine 28 is covalently cross-linked (Glycyl lysine isopeptide (Lys-Gly) (interchain with G-Cter in SUMO2); alternate). Residue lysine 28 forms a Glycyl lysine isopeptide (Lys-Gly) (interchain with G-Cter in ubiquitin); alternate linkage. Residues lysine 44 and lysine 76 each carry the N6-acetyllysine modification. The cysteines at positions 62 and 161 are disulfide-linked. Serine 77 is modified (phosphoserine). An N6-acetyllysine; alternate modification is found at lysine 82. Lysine 82 is covalently cross-linked (Glycyl lysine isopeptide (Lys-Gly) (interchain with G-Cter in SUMO2); alternate). Threonine 93 bears the Phosphothreonine mark. Asparagine 108 carries an N-linked (GlcNAc...) asparagine glycan. 3 positions are modified to N6-acetyllysine: lysine 125, lysine 131, and lysine 133.

Belongs to the cyclophilin-type PPIase family. PPIase A subfamily. As to quaternary structure, interacts with protein phosphatase PPP3CA/calcineurin A. Interacts with isoform 2 of BSG/CD147. Interacts with FOXO1; the interaction promotes FOXO1 dephosphorylation, nuclear accumulation and transcriptional activity. Interacts with integrin ITGA2B:ITGB3; the interaction is ROS and peptidyl-prolyl cis-trans isomerase (PPIase) activity-dependent and is increased in the presence of thrombin. Interacts with MAP3K5. Interacts with TARDBP; the interaction is dependent on the RNA-binding activity of TARDBP and the PPIase activity of PPIA/CYPA and the acetylation of PPIA/CYPA at Lys-125 favors the interaction. Interacts with HNRNPA1, HNRNPA2B1, HNRNPC, RBMX, HNRNPK and HNRNPM. Acetylation at Lys-125 markedly inhibits catalysis of cis to trans isomerization. PPIA acetylation also antagonizes the immunosuppressive effects of cyclosporine by inhibiting the sequential steps of cyclosporine binding and calcineurin inhibition. Acetylation at Lys-125 favors the interaction with TARDBP.

The protein resides in the cytoplasm. It is found in the secreted. It localises to the nucleus. It carries out the reaction [protein]-peptidylproline (omega=180) = [protein]-peptidylproline (omega=0). With respect to regulation, binds cyclosporin A (CsA). CsA mediates some of its effects via an inhibitory action on PPIase. Functionally, catalyzes the cis-trans isomerization of proline imidic peptide bonds in oligopeptides. Exerts a strong chemotactic effect on leukocytes partly through activation of one of its membrane receptors BSG/CD147, initiating a signaling cascade that culminates in MAPK/ERK activation. Activates endothelial cells (ECs) in a proinflammatory manner by stimulating activation of NF-kappa-B and ERK, JNK and p38 MAP-kinases and by inducing expression of adhesion molecules including SELE and VCAM1. Induces apoptosis in ECs by promoting the FOXO1-dependent expression of CCL2 and BCL2L11 which are involved in EC chemotaxis and apoptosis. In response to oxidative stress, initiates proapoptotic and antiapoptotic signaling in ECs via activation of NF-kappa-B and AKT1 and up-regulation of antiapoptotic protein BCL2. Negatively regulates MAP3K5/ASK1 kinase activity, autophosphorylation and oxidative stress-induced apoptosis mediated by MAP3K5/ASK1. Necessary for the assembly of TARDBP in heterogeneous nuclear ribonucleoprotein (hnRNP) complexes and regulates TARDBP binding to RNA UG repeats and TARDBP-dependent expression of HDAC6, ATG7 and VCP which are involved in clearance of protein aggregates. Plays an important role in platelet activation and aggregation. Regulates calcium mobilization and integrin ITGA2B:ITGB3 bidirectional signaling via increased ROS production as well as by facilitating the interaction between integrin and the cell cytoskeleton. Binds heparan sulfate glycosaminoglycans. The chain is Peptidyl-prolyl cis-trans isomerase A (PPIA) from Bos taurus (Bovine).